The following is an 812-amino-acid chain: E3 UFM1-protein ligase 1 homolog (812 aa).

Residues 389-495 (IKHSAGQGKP…KTKEDNTNIF (107 aa)) form a disordered region. Composition is skewed to basic and acidic residues over residues 403–415 (SEHRIGSDGKDLG) and 475–491 (DAKHGGKKASEKTKEDN).

The protein belongs to the UFL1 family.

In terms of biological role, E3 UFM1-protein ligase that mediates ufmylation of target proteins. This chain is E3 UFM1-protein ligase 1 homolog, found in Oryza sativa subsp. indica (Rice).